Reading from the N-terminus, the 345-residue chain is Pyruvate dehydrogenase E1 component subunit alpha (345 aa).

In terms of assembly, heterodimer of an alpha and a beta chain. Thiamine diphosphate serves as cofactor.

The catalysed reaction is N(6)-[(R)-lipoyl]-L-lysyl-[protein] + pyruvate + H(+) = N(6)-[(R)-S(8)-acetyldihydrolipoyl]-L-lysyl-[protein] + CO2. In terms of biological role, the pyruvate dehydrogenase complex catalyzes the overall conversion of pyruvate to acetyl-CoA and CO(2). It contains multiple copies of three enzymatic components: pyruvate dehydrogenase (E1), dihydrolipoamide acetyltransferase (E2) and lipoamide dehydrogenase (E3). This chain is Pyruvate dehydrogenase E1 component subunit alpha (pdhA), found in Acholeplasma laidlawii.